Here is a 301-residue protein sequence, read N- to C-terminus: Protoheme IX farnesyltransferase 1 (301 aa).

Transmembrane regions (helical) follow at residues 29–49 (VVALMLLTVLVGMCLAVPTAV), 51–71 (VQPLIAGMFGIALMAGSAAAL), 101–121 (ALIFAASIGGLGFVVLYVLVN), 123–143 (LTAWLTFASLIGYALVYTAYL), 150–170 (NIVIGGLAGAMPPLLGWTAVT), 177–197 (ALLLVIIIFTWTPPHFWALAI), 223–243 (CILLYTVLLAIACLLPVLVGM), 244–264 (CGPMYFVCSSLLSSVFIYKAW), and 281–301 (FSIYHLMLLFMALLIDHYLWS).

It belongs to the UbiA prenyltransferase family. Protoheme IX farnesyltransferase subfamily.

The protein resides in the cell inner membrane. The catalysed reaction is heme b + (2E,6E)-farnesyl diphosphate + H2O = Fe(II)-heme o + diphosphate. Its pathway is porphyrin-containing compound metabolism; heme O biosynthesis; heme O from protoheme: step 1/1. Converts heme B (protoheme IX) to heme O by substitution of the vinyl group on carbon 2 of heme B porphyrin ring with a hydroxyethyl farnesyl side group. This is Protoheme IX farnesyltransferase 1 from Shewanella putrefaciens (strain CN-32 / ATCC BAA-453).